The primary structure comprises 217 residues: Lipid A acyltransferase PagP (217 aa).

Residues 1-24 (MYLKRILITLSLITLPIVPCLSYA) form the signal peptide. Active-site residues include His-89, Asp-132, and Ser-133.

The protein belongs to the lipid A palmitoyltransferase family. As to quaternary structure, homodimer.

It is found in the cell outer membrane. The catalysed reaction is a lipid A + a 1,2-diacyl-sn-glycero-3-phosphocholine = a hepta-acyl lipid A + a 2-acyl-sn-glycero-3-phosphocholine. It carries out the reaction a lipid IVA + a 1,2-diacyl-sn-glycero-3-phosphocholine = a lipid IVB + a 2-acyl-sn-glycero-3-phosphocholine. The enzyme catalyses a lipid IIA + a 1,2-diacyl-sn-glycero-3-phosphocholine = a lipid IIB + a 2-acyl-sn-glycero-3-phosphocholine. Functionally, transfers a fatty acid residue from the sn-1 position of a phospholipid to the N-linked hydroxyfatty acid chain on the proximal unit of lipid A or its precursors. This Pectobacterium atrosepticum (strain SCRI 1043 / ATCC BAA-672) (Erwinia carotovora subsp. atroseptica) protein is Lipid A acyltransferase PagP.